The sequence spans 392 residues: L-rhamnonate dehydratase (392 aa).

Positions 22 and 48 each coordinate substrate. 3 residues coordinate Mg(2+): aspartate 214, glutamate 240, and glutamate 268. The Proton acceptor role is filled by histidine 318. Substrate is bound at residue glutamate 338.

The protein belongs to the mandelate racemase/muconate lactonizing enzyme family. RhamD subfamily. As to quaternary structure, homooctamer; tetramer of dimers. Mg(2+) is required as a cofactor.

The catalysed reaction is L-rhamnonate = 2-dehydro-3-deoxy-L-rhamnonate + H2O. Its function is as follows. Catalyzes the dehydration of L-rhamnonate to 2-keto-3-deoxy-L-rhamnonate (KDR). The protein is L-rhamnonate dehydratase of Burkholderia cenocepacia (strain HI2424).